The chain runs to 1140 residues: Envelopment polyprotein (1140 aa).

The signal sequence occupies residues 1 to 17 (MVGWVCISLVVLATTTA). Residues 18 to 489 (GLTRNLYELK…VPGLHGWATT (472 aa)) lie on the Lumenal side of the membrane. Intrachain disulfides connect Cys30–Cys155, Cys64–Cys161, Cys113–Cys132, Cys137–Cys142, Cys179–Cys189, and Cys214–Cys251. Asn138 carries N-linked (GlcNAc...) asparagine; by host glycosylation. Asn351 carries N-linked (GlcNAc...) asparagine; by host glycosylation. 4 cysteine pairs are disulfide-bonded: Cys380/Cys439, Cys384/Cys393, Cys409/Cys428, and Cys456/Cys479. A glycan (N-linked (GlcNAc...) asparagine; by host) is linked at Asn403. Residues 490–510 (ALLITFCFGWLLIPTITMIIL) traverse the membrane as a helical segment. Over 511–631 (KILRLLTFSC…LGVFRYKSRC (121 aa)) the chain is Cytoplasmic. Residues 520–537 (CSHYSTESKFKAILERVK) form a binding to the ribonucleoprotein region. CCHC-type zinc fingers lie at residues 549 to 569 (CDVC…KKSC) and 574 to 595 (CPYC…FSIC). Binding to the ribonucleoprotein regions lie at residues 592-609 (FSIC…KKSL), 596-607 (KLTNRFQENLKK), and 615-629 (KQGC…RYKS). The segment at 611–638 (RPEVKQGCYRTLGVFRYKSRCYVGLVWG) is interaction with host TRAF3. The ITAM domain maps to 615 to 638 (KQGCYRTLGVFRYKSRCYVGLVWG). A phosphotyrosine; by host mark is found at Tyr619 and Tyr632. Positions 619–622 (YRTL) match the YxxL motif. A helical membrane pass occupies residues 632–652 (YVGLVWGVLLTTELIVWAASA). Residues 653–1108 (DTPLMESGWS…EWLLGILNGN (456 aa)) are Lumenal-facing. Disulfide bonds link Cys739–Cys774, Cys743–Cys781, Cys755–Cys888, Cys769–Cys899, Cys784–Cys907, Cys810–Cys819, Cys827–Cys836, and Cys867–Cys871. The segment at 761 to 781 (YQYETSWGCNPPDCPGVGTGC) is fusion loop. N-linked (GlcNAc...) asparagine; by host glycosylation is present at Asn931. Disulfide bonds link Cys973/Cys1003, Cys996/Cys1048, Cys1013/Cys1018, Cys1049/Cys1054, and Cys1088/Cys1092. The helical transmembrane segment at 1109–1129 (WVVVAVLIVILILSILLFSFF) threads the bilayer. Residues 1125–1140 (LFSFFCPIRGRKNKSN) are binding to the ribonucleoprotein. Over 1130–1140 (CPIRGRKNKSN) the chain is Cytoplasmic.

This sequence belongs to the hantavirus envelope glycoprotein family. In terms of assembly, homodimer. Homotetramer; forms heterotetrameric Gn-Gc spikes in the pre-fusion conformation. Interacts (via C-terminus) with the nucleoprotein. Interacts with host TUFM; this interaction contributes to the virus-induced degradation of mitochondria by autophagy, which leads to degradation of host MAVS and inhibition of type I interferon (IFN) responses. Interacts with host MAP1LC3B; this interaction contributes to the virus-induced degradation of mitochondria by autophagy, which leads to degradation of host MAVS and inhibition of type I interferon (IFN) responses. Interacts (via C-terminus) with host TRAF3 (via N-terminus); this interaction inhibits the formation of TRAF3-TBK1 complexes. As to quaternary structure, homodimer. Homotetramer; forms heterotetrameric Gn-Gc spikes in the pre-fusion conformation. Homotrimer; forms homotrimer in the post-fusion conformation at acidic pH. Interacts (via C-terminus) with the nucleoprotein. In terms of processing, envelope polyprotein precursor is quickly cleaved in vivo just after synthesis, presumably by host signal peptidase.

The protein localises to the virion membrane. Its subcellular location is the host cell surface. It localises to the host Golgi apparatus membrane. The protein resides in the host endoplasmic reticulum membrane. It is found in the host mitochondrion. Functionally, forms homotetramers with glycoprotein C at the surface of the virion. Attaches the virion to host cell receptors including integrin ITGAV/ITGB3. This attachment induces virion internalization predominantly through clathrin-dependent endocytosis. Mediates the assembly and budding of infectious virus particles through its interaction with the nucleocapsid protein and the viral genome. May dysregulate normal immune and endothelial cell responses through an ITAM motif. Translocates to mitochondria, binds to host TUFM and recruits MAP1LC3B. These interactions induce mitochondrial autophagy and therefore destruction of host MAVS leading to inhibition of type I interferon (IFN) responses. Concomitant breakdown of glycoprotein N is apparently prevented by the nucleoprotein that may inhibit Gn-stimulated autophagosome-lysosome fusion. Interacts with the viral genomic RNA. Inhibits the host RIG-I/TBK1 pathway by disrupting the formation of TBK1-TRAF3 complexes and downstream signaling responses required for IFN-beta transcription. Forms homotetramers with glycoprotein N at the surface of the virion. Attaches the virion to host cell receptors including integrin ITGAV/ITGB3. This attachment induces virion internalization predominantly through clathrin-dependent endocytosis. Class II fusion protein that promotes fusion of viral membrane with host endosomal membrane after endocytosis of the virion. The protein is Envelopment polyprotein (GP) of Homo sapiens (Human).